Reading from the N-terminus, the 137-residue chain is Type III secretion protein HrcQb (137 aa).

The segment covering 1 to 22 (MSTEDLYQDDVESLEDYDDETA) has biased composition (acidic residues). Positions 1 to 67 (MSTEDLYQDD…EQQAPSGLDS (67 aa)) are disordered. A compositionally biased stretch (basic and acidic residues) spans 23–33 (EQEHEHEHEQQ). Acidic residues predominate over residues 36–58 (EPDDESEYAEAEPDDDEQEEQEE).

Belongs to the FliN/MopA/SpaO family. In terms of assembly, homotetramer. The four monomers assemble into two tightly bound homodimers. Interacts with HrcQa.

It localises to the cytoplasm. In terms of biological role, component of the type III secretion system, which is required for effector protein delivery, parasitism, and pathogenicity. Probably participates in the formation of a C-ring-like assembly along with HrcQa. In Pseudomonas syringae pv. tomato (strain ATCC BAA-871 / DC3000), this protein is Type III secretion protein HrcQb (hrcQb).